The sequence spans 241 residues: MANMGSRKHLKRFKAPKMWPIHKKEEVWTTKTSAGPHALEESIPLVMVLRDILGLAANSREAKIILNNSDVLVDGIPRKNHRFPVGFMDVISIPKINKTFRVLQDYKGRLVLKEIEEKDSTFKLVKILGKTTIKGGKTQLNLEGGRNIIADDDYKTGDVLLLNIPEQKISDSIKFEEGALGLITGGKHISEVGKIDEIKITQSSKSNTVLMETEEGSFLTLARYVFVVGQDKPVISLVGDN.

Residues 43–105 (IPLVMVLRDI…INKTFRVLQD (63 aa)) form the S4 RNA-binding domain.

The protein belongs to the eukaryotic ribosomal protein eS4 family.

In Methanosphaera stadtmanae (strain ATCC 43021 / DSM 3091 / JCM 11832 / MCB-3), this protein is Small ribosomal subunit protein eS4.